Consider the following 359-residue polypeptide: MSYRRELEKYRDLDEDEILGGLTEEELRTLENELDELDPDNALLPAGLRQKDQTTKAPTGPFRREELLDHLEKQAKEFKDREDLVPYTGEKRGKVWVPKQKPMDPVLESVTLEPELEEALANASDAELCDIAAILGMHTLMSNQQYYQALGSSSIVNKEGLNSVIKPTQYKPVPDEEPNATDVEETLERIKNNDPKLEEVNLNNIRNIPIPTLKAYAEALKENSYVKKFSIVGTRSNDPVAFALAEMLKVNKVLKTLNVESNFISGAGILRLVEALPYNTSLVELKIDNQSQPLGNKVEMEIVSMLEKNATLLKFGYHFTQQGPRLRASNAMMNNNDLVRKRRLADLTGPIIPKCRSGV.

The segment at 39 to 61 (PDNALLPAGLRQKDQTTKAPTGP) is disordered. The interval 39–138 (PDNALLPAGL…CDIAAILGMH (100 aa)) is tropomyosin-binding.

The protein belongs to the tropomodulin family. As to quaternary structure, binds to the N-terminus of tropomyosin and to actin. Interacts with FLII.

The protein localises to the cytoplasm. It localises to the cytoskeleton. Functionally, blocks the elongation and depolymerization of the actin filaments at the pointed end. The Tmod/TM complex contributes to the formation of the short actin protofilament, which in turn defines the geometry of the membrane skeleton. May play an important role in regulating the organization of actin filaments by preferentially binding to a specific tropomyosin isoform at its N-terminus. This chain is Tropomodulin-1 (TMOD1), found in Bos taurus (Bovine).